Consider the following 210-residue polypeptide: ATP-dependent Clp protease proteolytic subunit (210 aa).

The active-site Nucleophile is S107. The active site involves H132.

The protein belongs to the peptidase S14 family. In terms of assembly, fourteen ClpP subunits assemble into 2 heptameric rings which stack back to back to give a disk-like structure with a central cavity, resembling the structure of eukaryotic proteasomes.

Its subcellular location is the cytoplasm. It catalyses the reaction Hydrolysis of proteins to small peptides in the presence of ATP and magnesium. alpha-casein is the usual test substrate. In the absence of ATP, only oligopeptides shorter than five residues are hydrolyzed (such as succinyl-Leu-Tyr-|-NHMec, and Leu-Tyr-Leu-|-Tyr-Trp, in which cleavage of the -Tyr-|-Leu- and -Tyr-|-Trp bonds also occurs).. Functionally, cleaves peptides in various proteins in a process that requires ATP hydrolysis. Has a chymotrypsin-like activity. Plays a major role in the degradation of misfolded proteins. This is ATP-dependent Clp protease proteolytic subunit from Cereibacter sphaeroides (strain ATCC 17029 / ATH 2.4.9) (Rhodobacter sphaeroides).